A 771-amino-acid polypeptide reads, in one-letter code: Rho guanine nucleotide exchange factor 6 (771 aa).

Positions 1 to 111 (MNPEERLVTW…TLLAVNKATE (111 aa)) constitute a Calponin-homology (CH) domain. The tract at residues 115–157 (SERPCGRSSSLSAATSSQTNPQVAVPSTAPEQHSEEKAEMTEN) is disordered. Residues 122-131 (SSSLSAATSS) show a composition bias toward low complexity. Ser126 is subject to Phosphoserine. Thr133 is subject to Phosphothreonine. Residues 159 to 218 (SHQLIVKARFNFKQTNEDELSVCKGDIIYVTRVEEGGWWEGTLNGRTGWFPSNYVREIKP) enclose the SH3 domain. At Ser224 the chain carries Phosphoserine. The DH domain occupies 240–420 (YYTVVLQNIL…KTLMGQCQDL (181 aa)). A PH domain is found at 442–547 (DIKTLGNVIF…WMEQLNRLTK (106 aa)). Residue Ser487 is modified to Phosphoserine. The span at 556 to 572 (SKTSSSSCSTHSSFSST) shows a compositional bias: low complexity. Positions 556 to 580 (SKTSSSSCSTHSSFSSTGQPRGPLE) are disordered. Ser639 and Ser679 each carry phosphoserine.

As to quaternary structure, interacts with PAK kinases through the SH3 domain. Interacts with GIT1. Component of cytoplasmic complexes, which also contain PXN, GIT1 and PAK1. Interacts with BIN2. Identified in a complex with BIN2 and GIT2. Interacts with PARVB. Interacts with PARVG; the guanine nucleotide exchange factor activity of ARHGEF6 is essential for PARVG-induced enhancement of cell spreading. In terms of tissue distribution, detected in adult heart, spleen, lung, skeletal muscle, kidney and testis. Detected throughout embryogenesis.

It localises to the cell projection. It is found in the lamellipodium. In terms of biological role, acts as a RAC1 guanine nucleotide exchange factor (GEF). The polypeptide is Rho guanine nucleotide exchange factor 6 (Arhgef6) (Mus musculus (Mouse)).